The chain runs to 505 residues: L-carnitine/gamma-butyrobetaine antiporter (505 aa).

The next 12 helical transmembrane spans lie at 10-30 (IEPK…WLTV), 50-70 (IWGW…FWLV), 92-112 (IFMM…SIEI), 143-163 (GPLP…FFFV), 195-215 (FYLV…TPLV), 231-251 (LDAI…ACGL), 263-283 (SYLS…SFIM), 316-336 (WTVF…IFLA), 347-367 (LCFG…TVLG), 403-423 (LSTA…VTLI), 446-466 (LLVR…LLAL), and 475-495 (AIIA…LSFI).

It belongs to the BCCT transporter (TC 2.A.15) family. CaiT subfamily. As to quaternary structure, homotrimer.

It localises to the cell inner membrane. It carries out the reaction 4-(trimethylamino)butanoate(in) + (R)-carnitine(out) = 4-(trimethylamino)butanoate(out) + (R)-carnitine(in). It functions in the pathway amine and polyamine metabolism; carnitine metabolism. Catalyzes the exchange of L-carnitine for gamma-butyrobetaine. This chain is L-carnitine/gamma-butyrobetaine antiporter, found in Salmonella arizonae (strain ATCC BAA-731 / CDC346-86 / RSK2980).